The chain runs to 744 residues: Catalase-peroxidase 3 (744 aa).

The segment at residues 106–228 (WHFAGTYRIG…LAASEMGLIY (123 aa)) is a cross-link (tryptophyl-tyrosyl-methioninium (Trp-Tyr) (with M-254)). His-107 serves as the catalytic Proton acceptor. Positions 228–254 (YVDPQGPATLPDPLASARDIRETFRRM) form a cross-link, tryptophyl-tyrosyl-methioninium (Tyr-Met) (with W-106). A heme b-binding site is contributed by His-269.

Belongs to the peroxidase family. Peroxidase/catalase subfamily. Homodimer or homotetramer. Heme b serves as cofactor. In terms of processing, formation of the three residue Trp-Tyr-Met cross-link is important for the catalase, but not the peroxidase activity of the enzyme.

The catalysed reaction is H2O2 + AH2 = A + 2 H2O. It catalyses the reaction 2 H2O2 = O2 + 2 H2O. Functionally, bifunctional enzyme with both catalase and broad-spectrum peroxidase activity. The protein is Catalase-peroxidase 3 of Mycolicibacterium smegmatis (strain ATCC 700084 / mc(2)155) (Mycobacterium smegmatis).